Here is an 873-residue protein sequence, read N- to C-terminus: Putative receptor-like protein kinase At5g39000 (873 aa).

Positions 1-21 (MIRHALLIFSILVSTPIVGEG) are cleaved as a signal peptide. Topologically, residues 22–445 (ATSTYEPTDV…KNKSHILPIT (424 aa)) are extracellular. N-linked (GlcNAc...) asparagine glycans are attached at residues asparagine 49, asparagine 64, asparagine 138, asparagine 168, asparagine 216, asparagine 266, asparagine 300, asparagine 340, and asparagine 437. Residues 446 to 466 (LAVVGSLVVLAMFVVGVLVIM) traverse the membrane as a helical segment. Over 467 to 873 (KKKKKSKPST…FSEINEPKAR (407 aa)) the chain is Cytoplasmic. Residues 472–494 (SKPSTNSSWCPLPHGTDSTNTKP) are disordered. The Protein kinase domain occupies 518–803 (FEDKLIIGVG…EFALQLHETA (286 aa)). Residues 524 to 532 (IGVGGFGSV) and lysine 547 contribute to the ATP site. Residue aspartate 646 is the Proton acceptor of the active site. The interval 813–843 (LDLMPSGEVGTTTDGEDDLFSRTTGHVGKST) is disordered. The segment covering 833 to 843 (SRTTGHVGKST) has biased composition (polar residues).

Belongs to the protein kinase superfamily. Ser/Thr protein kinase family.

The protein localises to the membrane. In Arabidopsis thaliana (Mouse-ear cress), this protein is Putative receptor-like protein kinase At5g39000.